A 77-amino-acid polypeptide reads, in one-letter code: Acyl carrier protein (77 aa).

The 74-residue stretch at 4 to 77 folds into the Carrier domain; it reads SETFEKVKKI…TVQAAVDXIN (74 aa). S40 bears the O-(pantetheine 4'-phosphoryl)serine mark.

It belongs to the acyl carrier protein (ACP) family. 4'-phosphopantetheine is transferred from CoA to a specific serine of apo-ACP by AcpS. This modification is essential for activity because fatty acids are bound in thioester linkage to the sulfhydryl of the prosthetic group.

Its subcellular location is the cytoplasm. The protein operates within lipid metabolism; fatty acid biosynthesis. In terms of biological role, carrier of the growing fatty acid chain in fatty acid biosynthesis. The chain is Acyl carrier protein from Anabaena variabilis.